A 140-amino-acid chain; its full sequence is ATP synthase epsilon chain (140 aa).

This sequence belongs to the ATPase epsilon chain family. F-type ATPases have 2 components, CF(1) - the catalytic core - and CF(0) - the membrane proton channel. CF(1) has five subunits: alpha(3), beta(3), gamma(1), delta(1), epsilon(1). CF(0) has three main subunits: a, b and c.

Its subcellular location is the cell inner membrane. In terms of biological role, produces ATP from ADP in the presence of a proton gradient across the membrane. The sequence is that of ATP synthase epsilon chain from Neisseria gonorrhoeae (strain ATCC 700825 / FA 1090).